Consider the following 210-residue polypeptide: Probable high-affinity nitrate transporter-activating protein 2.2 (210 aa).

A signal peptide spans M1–G23. Residues I182 to V202 form a helical membrane-spanning segment.

This sequence belongs to the NAR2 family.

The protein localises to the cell membrane. In terms of biological role, involved in nitrate transport. The polypeptide is Probable high-affinity nitrate transporter-activating protein 2.2 (NAR2.2) (Oryza sativa subsp. japonica (Rice)).